We begin with the raw amino-acid sequence, 203 residues long: Molybdenum cofactor guanylyltransferase (203 aa).

Residues 12-14 (LAG), Lys-25, Asn-53, Asp-71, and Asp-101 contribute to the GTP site. Asp-101 contributes to the Mg(2+) binding site.

Belongs to the MobA family. In terms of assembly, monomer. It depends on Mg(2+) as a cofactor.

The protein resides in the cytoplasm. The enzyme catalyses Mo-molybdopterin + GTP + H(+) = Mo-molybdopterin guanine dinucleotide + diphosphate. Transfers a GMP moiety from GTP to Mo-molybdopterin (Mo-MPT) cofactor (Moco or molybdenum cofactor) to form Mo-molybdopterin guanine dinucleotide (Mo-MGD) cofactor. This Cupriavidus metallidurans (strain ATCC 43123 / DSM 2839 / NBRC 102507 / CH34) (Ralstonia metallidurans) protein is Molybdenum cofactor guanylyltransferase.